The sequence spans 102 residues: NADH-quinone oxidoreductase subunit K (102 aa).

A run of 3 helical transmembrane segments spans residues 6–26, 30–50, and 63–83; these read LIGMMILAAGLFAIGLFGVLA, ILFQLVALEVALSGPALAFVA, and MLILVLTLAAAEVAVGLALLL.

The protein belongs to the complex I subunit 4L family. NDH-1 is composed of 14 different subunits. Subunits NuoA, H, J, K, L, M, N constitute the membrane sector of the complex.

The protein localises to the cell inner membrane. The enzyme catalyses a quinone + NADH + 5 H(+)(in) = a quinol + NAD(+) + 4 H(+)(out). NDH-1 shuttles electrons from NADH, via FMN and iron-sulfur (Fe-S) centers, to quinones in the respiratory chain. The immediate electron acceptor for the enzyme in this species is believed to be ubiquinone. Couples the redox reaction to proton translocation (for every two electrons transferred, four hydrogen ions are translocated across the cytoplasmic membrane), and thus conserves the redox energy in a proton gradient. In Rhodopseudomonas palustris (strain HaA2), this protein is NADH-quinone oxidoreductase subunit K.